The sequence spans 210 residues: Large ribosomal subunit protein uL3 (210 aa).

The segment at 136–156 (THGTEKAHRSGGSIGNNTEPG) is disordered.

It belongs to the universal ribosomal protein uL3 family. Part of the 50S ribosomal subunit. Forms a cluster with proteins L14 and L19.

Its function is as follows. One of the primary rRNA binding proteins, it binds directly near the 3'-end of the 23S rRNA, where it nucleates assembly of the 50S subunit. This Solidesulfovibrio magneticus (strain ATCC 700980 / DSM 13731 / RS-1) (Desulfovibrio magneticus) protein is Large ribosomal subunit protein uL3.